The following is a 425-amino-acid chain: High-affinity branched-chain amino acid transport system permease protein LivM (425 aa).

11 consecutive transmembrane segments (helical) span residues 6-26 (IAMA…FMGV), 45-65 (WQWI…RPMF), 92-112 (FLMA…RGSV), 120-140 (IYII…LLVL), 145-165 (FYAI…LGFW), 167-187 (CLPL…FPVL), 191-211 (GDYL…LLLN), 260-280 (RVIF…FVIN), 311-331 (IKLT…TLFA), 353-373 (IVVL…VLLV), and 388-408 (LMLG…LLPM).

Belongs to the binding-protein-dependent transport system permease family. LivHM subfamily.

It localises to the cell inner membrane. Its function is as follows. Part of the binding-protein-dependent transport system for branched-chain amino acids. Probably responsible for the translocation of the substrates across the membrane. This is High-affinity branched-chain amino acid transport system permease protein LivM (livM) from Salmonella typhimurium (strain LT2 / SGSC1412 / ATCC 700720).